The primary structure comprises 260 residues: Phosphatidylglycerol--prolipoprotein diacylglyceryl transferase (260 aa).

The next 4 membrane-spanning stretches (helical) occupy residues 17–37 (VVKWYGIMMALGVVALVSWIF), 52–72 (LTAAIIAIPSGIVFAKLLHVI), 85–105 (IFSGEGLTIFGAIIGATIGLW), and 113–133 (FNLGYLLDVAVPGILLGQAIG). An a 1,2-diacyl-sn-glycero-3-phospho-(1'-sn-glycerol)-binding site is contributed by R134. 3 helical membrane passes run 170 to 190 (APTQAYEIIFLLCLLTFSLFI), 198 to 218 (GQLFLLYISLYAAWRVAIGFV), and 227 to 247 (GLEQAQVVGLILMAVAVPLFI).

The protein belongs to the Lgt family.

It localises to the cell membrane. The catalysed reaction is L-cysteinyl-[prolipoprotein] + a 1,2-diacyl-sn-glycero-3-phospho-(1'-sn-glycerol) = an S-1,2-diacyl-sn-glyceryl-L-cysteinyl-[prolipoprotein] + sn-glycerol 1-phosphate + H(+). Its pathway is protein modification; lipoprotein biosynthesis (diacylglyceryl transfer). Functionally, catalyzes the transfer of the diacylglyceryl group from phosphatidylglycerol to the sulfhydryl group of the N-terminal cysteine of a prolipoprotein, the first step in the formation of mature lipoproteins. In Dehalococcoides mccartyi (strain ATCC BAA-2100 / JCM 16839 / KCTC 5957 / BAV1), this protein is Phosphatidylglycerol--prolipoprotein diacylglyceryl transferase.